The sequence spans 608 residues: Nuclear protein localization protein 4 homolog (608 aa).

Ala2 is modified (N-acetylalanine). Lys179 carries the N6-acetyllysine modification. In terms of domain architecture, MPN spans 226-363 (IMFENHTVAD…ICRLSPDGHF (138 aa)). The segment at 580–608 (TSAMWACQHCTFMNQPGTGHCEMCSLPRT) adopts a RanBP2-type zinc-finger fold.

The protein belongs to the NPL4 family. Heterodimer with UFD1. The heterodimer binds ubiquitinated proteins. The heterodimer binds to VCP and inhibits Golgi membrane fusion. Interacts with ZFAND2B; probably through VCP.

The protein localises to the cytoplasm. It localises to the cytosol. Its subcellular location is the endoplasmic reticulum. The protein resides in the nucleus. The protein operates within protein degradation; proteasomal ubiquitin-dependent pathway. The ternary complex containing UFD1, VCP and NPLOC4 binds ubiquitinated proteins and is necessary for the export of misfolded proteins from the ER to the cytoplasm, where they are degraded by the proteasome. The NPLOC4-UFD1-VCP complex regulates spindle disassembly at the end of mitosis and is necessary for the formation of a closed nuclear envelope. Acts as a negative regulator of type I interferon production via the complex formed with VCP and UFD1, which binds to RIGI and recruits RNF125 to promote ubiquitination and degradation of RIGI. The sequence is that of Nuclear protein localization protein 4 homolog (Nploc4) from Mus musculus (Mouse).